A 393-amino-acid polypeptide reads, in one-letter code: S-adenosylmethionine synthase 3 (393 aa).

Position 43 (Glu-43) interacts with K(+). L-methionine-binding residues include Glu-56 and Gln-99. ATP is bound by residues 167–169, 235–238, Asp-246, 252–253, Ala-269, Lys-273, and Lys-277; these read DGK, SGRF, and RK. Asp-246 contacts L-methionine. Lys-277 contacts L-methionine.

It belongs to the AdoMet synthase family. Homotetramer. It depends on Mn(2+) as a cofactor. Mg(2+) serves as cofactor. The cofactor is Co(2+). Requires K(+) as cofactor.

The protein localises to the cytoplasm. It catalyses the reaction L-methionine + ATP + H2O = S-adenosyl-L-methionine + phosphate + diphosphate. It participates in amino-acid biosynthesis; S-adenosyl-L-methionine biosynthesis; S-adenosyl-L-methionine from L-methionine: step 1/1. Catalyzes the formation of S-adenosylmethionine from methionine and ATP. The reaction comprises two steps that are both catalyzed by the same enzyme: formation of S-adenosylmethionine (AdoMet) and triphosphate, and subsequent hydrolysis of the triphosphate. The sequence is that of S-adenosylmethionine synthase 3 (SAM3) from Actinidia chinensis var. chinensis (Chinese soft-hair kiwi).